We begin with the raw amino-acid sequence, 242 residues long: Probable transcriptional regulatory protein MHP7448_0474 (242 aa).

It belongs to the TACO1 family.

The protein localises to the cytoplasm. In Mesomycoplasma hyopneumoniae (strain 7448) (Mycoplasma hyopneumoniae), this protein is Probable transcriptional regulatory protein MHP7448_0474.